The sequence spans 2944 residues: Collagen alpha-1(VII) chain (2944 aa).

Positions 1–24 (MRLRLLVAALCAAEILMGAPEVWA) are cleaved as a signal peptide. Residues 18–1254 (GAPEVWAQPR…TGPCAVHCPK (1237 aa)) are nonhelical region (NC1). Residues 39-212 (DIVFLLDGSS…SILRTLLPLI (174 aa)) enclose the VWFA 1 domain. Fibronectin type-III domains follow at residues 235 to 330 (GPRD…TAKE), 331 to 417 (GLEL…TASS), 418 to 508 (VEQT…LEQL), 511 to 598 (PVMN…DPEA), 601 to 688 (VVPG…DPLG), 689 to 776 (PVRR…APEP), 779 to 867 (SVSK…PPAT), 870 to 957 (LLET…EPSH), and 959 to 1053 (PSTE…SHGP). Asn338 is a glycosylation site (N-linked (GlcNAc...) asparagine). An N-linked (GlcNAc...) asparagine glycan is attached at Asn787. The region spanning 1055–1230 (DVVFLLHATR…PGLDRAVSDL (176 aa)) is the VWFA 2 domain. A glycan (N-linked (GlcNAc...) asparagine) is linked at Asn1110. The Cell attachment site signature appears at 1171–1173 (RGD). An interrupted collagenous region region spans residues 1255–1475 (GQKGEPGVTG…GLRGAPGMTG (221 aa)). The triple-helical region stretch occupies residues 1255–2775 (GQKGEPGVTG…GPRGEKGEAA (1521 aa)). Disordered stretches follow at residues 1259 to 1934 (EPGV…GSLP) and 1960 to 2773 (SSGS…EKGE). Residues 1338-1352 (RGPQGPKGEPGEPGQ) show a composition bias toward low complexity. Gly residues predominate over residues 1353 to 1363 (ITGGGGPGFPG). Composition is skewed to basic and acidic residues over residues 1397–1406 (KGDKGDRGER) and 1439–1448 (PGEKGEKGDC). A compositionally biased stretch (low complexity) spans 1507–1518 (PGAAGHPGVEGP). 3 stretches are compositionally biased toward basic and acidic residues: residues 1527–1536 (RRGEKGEPGR), 1627–1639 (RGRD…KGDE), and 1666–1680 (VGEK…EDGR). Residues 1813 to 1822 (PPGPPGPPGV) show a composition bias toward pro residues. Basic and acidic residues-rich tracts occupy residues 1846 to 1855 (EDGRKGEKGD), 1862 to 1871 (EGPDGPKGER), and 1968 to 1984 (PERR…RGPP). Residues 2002–2004 (RGD) carry the Cell attachment site motif. Positions 2040-2049 (GRAGGSGEAG) are enriched in gly residues. Basic and acidic residues predominate over residues 2050–2068 (RPGERGERGEKGERGDQGR). The short motif at 2063 to 2065 (RGD) is the Cell attachment site element. A compositionally biased stretch (pro residues) spans 2074-2083 (LPGPPGPPGP). The segment covering 2130–2140 (DVGEPGKRGHD) has biased composition (basic and acidic residues). Pro2158, Pro2167, Pro2176, and Pro2179 each carry 4-hydroxyproline. Composition is skewed to low complexity over residues 2182-2197 (PGLA…SGLK), 2226-2241 (SGLV…PGQV), 2279-2299 (PKGE…PPGA), and 2306-2317 (PGDLAGALLGEP). A compositionally biased stretch (basic and acidic residues) spans 2319 to 2335 (AKGDRGLPGPRGEKGEA). Residues 2414-2427 (ERGLAGPPGREGAP) are compositionally biased toward low complexity. Composition is skewed to basic and acidic residues over residues 2462-2477 (RGER…DGHP) and 2525-2544 (AKGD…KGPR). Over residues 2576–2594 (PKGEPGAAGIPGEPGAPGK) the composition is skewed to low complexity. The Cell attachment site motif lies at 2601–2603 (RGD). Residues 2615 to 2636 (LKGEKGIKGTCGRDGERGDKGE) show a composition bias toward basic and acidic residues. Residues Lys2616 and Lys2622 each carry the 5-hydroxylysine modification. Positions 2631 to 2633 (RGD) match the Cell attachment site motif. 4-hydroxyproline is present on residues Pro2655, Pro2658, and Pro2664. Residues 2695 to 2704 (GPPGVGGFPG) are compositionally biased toward gly residues. The interval 2776–2944 (LTEDDIRDFV…GVHSQKTGAA (169 aa)) is nonhelical region (NC2). The BPTI/Kunitz inhibitor domain occupies 2879–2931 (CSLPLDEGSCTAYTLRWYHRAVPGGTACHPFVYGGCGGNANRFGTREACERRC). Intrachain disulfides connect Cys2879-Cys2931, Cys2888-Cys2914, and Cys2906-Cys2927.

Homotrimer. Interacts with MIA3/TANGO1; facilitating its loading into transport carriers and subsequent secretion. Prolines at the third position of the tripeptide repeating unit (G-X-Y) are hydroxylated in some or all of the chains.

The protein resides in the secreted. The protein localises to the extracellular space. It localises to the extracellular matrix. Its subcellular location is the basement membrane. Stratified squamous epithelial basement membrane protein that forms anchoring fibrils which may contribute to epithelial basement membrane organization and adherence by interacting with extracellular matrix (ECM) proteins such as type IV collagen. The protein is Collagen alpha-1(VII) chain of Mus musculus (Mouse).